The chain runs to 293 residues: uncharacterized protein (293 aa).

Residue Asp-119 is part of the active site.

It belongs to the pseudouridine synthase RluA family.

It carries out the reaction a uridine in RNA = a pseudouridine in RNA. This is an uncharacterized protein from Helicobacter pylori (strain J99 / ATCC 700824) (Campylobacter pylori J99).